The following is a 712-amino-acid chain: U11/U12 small nuclear ribonucleoprotein 48 kDa protein (712 aa).

The segment at F98–L125 adopts a CHHC U11-48K-type zinc-finger fold. Residues C101, H107, H117, and C121 each contribute to the Zn(2+) site. The tract at residues Q562–E712 is disordered. Composition is skewed to basic and acidic residues over residues K585–I595, Q603–Y614, K629–E663, S672–S693, and F702–E712.

In terms of assembly, component of the U11/U12 snRNPs that are part of the U12-type spliceosome. Not found in the major spliceosome.

The protein localises to the nucleus. Functionally, likely involved in U12-type 5' splice site recognition. This chain is U11/U12 small nuclear ribonucleoprotein 48 kDa protein (SNRNP48), found in Arabidopsis thaliana (Mouse-ear cress).